An 882-amino-acid polypeptide reads, in one-letter code: DNA mismatch repair protein MutS (882 aa).

Residue 627–634 (GPNMAGKS) coordinates ATP.

Belongs to the DNA mismatch repair MutS family.

In terms of biological role, this protein is involved in the repair of mismatches in DNA. It is possible that it carries out the mismatch recognition step. This protein has a weak ATPase activity. The chain is DNA mismatch repair protein MutS from Anaeromyxobacter dehalogenans (strain 2CP-C).